The primary structure comprises 1051 residues: Ubiquitin carboxyl-terminal hydrolase 28 (1051 aa).

The disordered stretch occupies residues 60–82 (DQRVKEPSHDTTAAEPSEVEESA). At S67 the chain carries Phosphoserine. One can recognise a UIM domain in the interval 97–116 (DNKDDLQAAIALSLLESPNI). K99 is covalently cross-linked (Glycyl lysine isopeptide (Lys-Gly) (interchain with G-Cter in SUMO2)). Positions 121–135 (RDLNRAHEANSAETK) are enriched in basic and acidic residues. The segment at 121 to 140 (RDLNRAHEANSAETKRSKRK) is disordered. One can recognise a USP domain in the interval 162 to 655 (VGLKNVGNTC…SAYCLMYIND (494 aa)). Residue C171 is the Nucleophile of the active site. S376 carries the phosphoserine modification. Residues 483–538 (DLTPKESSSPESCSQNAGSTFSSPEDALPSSEGMNGPFTSPHSSLETPAPPAPRTV) form a disordered region. Composition is skewed to polar residues over residues 487–505 (KESS…TFSS) and 519–528 (PFTSPHSSLE). Phosphoserine is present on S555. The active-site Proton acceptor is the H605. The tract at residues 703–735 (EEQSCKIPQMESSPNSSSQDFSTSQESPAVSSH) is disordered. Residues 713–730 (ESSPNSSSQDFSTSQESP) show a composition bias toward low complexity. S720 carries the post-translational modification Phosphoserine. T1022 carries the post-translational modification Phosphothreonine.

The protein belongs to the peptidase C19 family. USP28 subfamily. Interacts with ZNF304. Interacts with PRKD1. Interacts with TP53BP1. Interacts with FBXW7; following DNA damage, dissociates from FBXW7 leading to degradation of MYC. Degraded upon nickel ion level or hypoxia exposure. In terms of processing, phosphorylated upon DNA damage at Ser-67 and Ser-720, by ATM or ATR. Phosphorylated by PRKD1.

Its subcellular location is the nucleus. The protein resides in the nucleoplasm. It carries out the reaction Thiol-dependent hydrolysis of ester, thioester, amide, peptide and isopeptide bonds formed by the C-terminal Gly of ubiquitin (a 76-residue protein attached to proteins as an intracellular targeting signal).. Functionally, deubiquitinase involved in DNA damage response checkpoint and MYC proto-oncogene stability. Involved in DNA damage induced apoptosis by specifically deubiquitinating proteins of the DNA damage pathway such as CLSPN. Also involved in G2 DNA damage checkpoint, by deubiquitinating CLSPN, and preventing its degradation by the anaphase promoting complex/cyclosome (APC/C). In contrast, it does not deubiquitinate PLK1. Specifically deubiquitinates MYC in the nucleoplasm, leading to prevent MYC degradation by the proteasome: acts by specifically interacting with FBXW7 (FBW7alpha) in the nucleoplasm and counteracting ubiquitination of MYC by the SCF(FBXW7) complex. Deubiquitinates ZNF304, hence preventing ZNF304 degradation by the proteasome and leading to the activated KRAS-mediated promoter hypermethylation and transcriptional silencing of tumor suppressor genes (TSGs) in a subset of colorectal cancers (CRC) cells. This Mus musculus (Mouse) protein is Ubiquitin carboxyl-terminal hydrolase 28 (Usp28).